We begin with the raw amino-acid sequence, 187 residues long: Elongation factor P (187 aa).

It belongs to the elongation factor P family.

It is found in the cytoplasm. Its pathway is protein biosynthesis; polypeptide chain elongation. Involved in peptide bond synthesis. Stimulates efficient translation and peptide-bond synthesis on native or reconstituted 70S ribosomes in vitro. Probably functions indirectly by altering the affinity of the ribosome for aminoacyl-tRNA, thus increasing their reactivity as acceptors for peptidyl transferase. The polypeptide is Elongation factor P (Desulforapulum autotrophicum (strain ATCC 43914 / DSM 3382 / VKM B-1955 / HRM2) (Desulfobacterium autotrophicum)).